The primary structure comprises 376 residues: Cyclin-dependent kinase 9-A (376 aa).

Positions 19–319 constitute a Protein kinase domain; sequence YERLAKIGQG…SDDALNNDFF (301 aa). ATP is bound by residues 25 to 33 and K48; that span reads IGQGTFGEV. D153 functions as the Proton acceptor in the catalytic mechanism. Residues 345–376 are disordered; sequence PPRRRGGHMPQQPANQARNPAATNQSEFERVF. Residues 354 to 369 are compositionally biased toward low complexity; sequence PQQPANQARNPAATNQ.

It belongs to the protein kinase superfamily. CMGC Ser/Thr protein kinase family. CDC2/CDKX subfamily. Associates with cyclin-T to form P-TEFb.

The protein resides in the nucleus. It catalyses the reaction L-seryl-[protein] + ATP = O-phospho-L-seryl-[protein] + ADP + H(+). It carries out the reaction L-threonyl-[protein] + ATP = O-phospho-L-threonyl-[protein] + ADP + H(+). The catalysed reaction is [DNA-directed RNA polymerase] + ATP = phospho-[DNA-directed RNA polymerase] + ADP + H(+). Member of the cyclin-dependent kinase pair (CDK9/cyclin-T) complex, also called positive transcription elongation factor B (P-TEFb), which is proposed to facilitate the transition from abortive to production elongation by phosphorylating the CTD (C-terminal domain) of the large subunit of RNA polymerase II (RNAP II) and SUPT5H. This is Cyclin-dependent kinase 9-A (cdk9-a) from Xenopus laevis (African clawed frog).